The sequence spans 234 residues: Filarial antigen Av33 (234 aa).

Residues 1 to 17 (MKILSCLLLCTITVLEG) form the signal peptide. The cysteines at positions 135 and 230 are disulfide-linked. The segment at 204-234 (TSQASEATTIPTTTQTPVEAPETPSFCVPIY) is disordered. A compositionally biased stretch (low complexity) spans 211–220 (TTIPTTTQTP).

The protein belongs to the protease inhibitor I33 family.

It localises to the secreted. In terms of biological role, aspartyl protease inhibitor. This is Filarial antigen Av33 from Acanthocheilonema viteae (Filarial nematode worm).